Consider the following 165-residue polypeptide: SsrA-binding protein (165 aa).

A compositionally biased stretch (basic and acidic residues) spans 135 to 158; the sequence is QAHDKRQDMARRDAQREVTRELGR. The disordered stretch occupies residues 135 to 165; that stretch reads QAHDKRQDMARRDAQREVTRELGRRVKGMTS.

It belongs to the SmpB family.

Its subcellular location is the cytoplasm. Its function is as follows. Required for rescue of stalled ribosomes mediated by trans-translation. Binds to transfer-messenger RNA (tmRNA), required for stable association of tmRNA with ribosomes. tmRNA and SmpB together mimic tRNA shape, replacing the anticodon stem-loop with SmpB. tmRNA is encoded by the ssrA gene; the 2 termini fold to resemble tRNA(Ala) and it encodes a 'tag peptide', a short internal open reading frame. During trans-translation Ala-aminoacylated tmRNA acts like a tRNA, entering the A-site of stalled ribosomes, displacing the stalled mRNA. The ribosome then switches to translate the ORF on the tmRNA; the nascent peptide is terminated with the 'tag peptide' encoded by the tmRNA and targeted for degradation. The ribosome is freed to recommence translation, which seems to be the essential function of trans-translation. The chain is SsrA-binding protein from Mycolicibacterium vanbaalenii (strain DSM 7251 / JCM 13017 / BCRC 16820 / KCTC 9966 / NRRL B-24157 / PYR-1) (Mycobacterium vanbaalenii).